The primary structure comprises 485 residues: NADH-quinone oxidoreductase subunit N (485 aa).

Helical transmembrane passes span 8–28, 35–55, 75–95, 105–125, 127–147, 159–179, 203–223, 235–255, 271–291, 297–317, 326–346, 374–394, 408–430, and 455–475; these read LIALLPLLIVGLTVVVVMLSI, FLNATLSVLGLNAALVSLWFV, LYTGLVLLASLATCTFAYPWL, FYLLVLIAALGGILLAGANHL, ALFLGIELISLPLFGLVGYAF, YTILSAAASSFLLFGMALVYA, LLAGLGLMIVGLGFKLSLVPF, PAPVSTFLATASKIAIFGVVM, VVLGLIAFASIIFGNLMALSQ, LLGYSSISHLGYLLVALIALQ, VGVYLAGYLFSSLGAFGVVSL, AVMTVMMLSLAGIPMTLGFIG, WWLVAAVVVGSAIGLYYYLRVAV, and IVVLISALLVLVLGIWPQPLI.

This sequence belongs to the complex I subunit 2 family. NDH-1 is composed of 13 different subunits. Subunits NuoA, H, J, K, L, M, N constitute the membrane sector of the complex.

The protein localises to the cell inner membrane. It carries out the reaction a quinone + NADH + 5 H(+)(in) = a quinol + NAD(+) + 4 H(+)(out). NDH-1 shuttles electrons from NADH, via FMN and iron-sulfur (Fe-S) centers, to quinones in the respiratory chain. The immediate electron acceptor for the enzyme in this species is believed to be ubiquinone. Couples the redox reaction to proton translocation (for every two electrons transferred, four hydrogen ions are translocated across the cytoplasmic membrane), and thus conserves the redox energy in a proton gradient. This chain is NADH-quinone oxidoreductase subunit N, found in Klebsiella pneumoniae (strain 342).